The primary structure comprises 464 residues: Glutamate decarboxylase (464 aa).

An N6-(pyridoxal phosphate)lysine modification is found at Lys-274.

The protein belongs to the group II decarboxylase family. It depends on pyridoxal 5'-phosphate as a cofactor.

The enzyme catalyses L-glutamate + H(+) = 4-aminobutanoate + CO2. Functionally, catalyzes the pyridoxal-dependent decarboxylation of glutamate to produce 4-aminobutanoate. Has weak activity with aspartate, but cannot complement an E.coli panD deletion mutant. This Aliivibrio fischeri (strain ATCC 700601 / ES114) (Vibrio fischeri) protein is Glutamate decarboxylase.